The chain runs to 395 residues: Scyllo-inosose 3-dehydrogenase (395 aa).

Zn(2+) is bound at residue Cys-66. Active-site charge relay system residues include Ser-68 and His-71. Zn(2+) contacts are provided by His-95, Glu-96, Cys-131, Cys-134, Cys-137, Cys-145, and Glu-193. 3 residues coordinate NAD(+): Ile-223, Glu-243, and Arg-248.

It belongs to the zinc-containing alcohol dehydrogenase family. In terms of assembly, homodimer. It depends on Zn(2+) as a cofactor.

It catalyses the reaction scyllo-inosose + NAD(+) = 3-dehydro-scyllo-inosose + NADH + H(+). It functions in the pathway polyol metabolism; myo-inositol metabolism. Functionally, catalyzes the NAD(+)-dependent oxidation of scyllo-inosose (2-keto-myo-inositol) to 3-dehydro-scyllo-inosose (diketo-inositol), and thus probably functions in a myo-inositol degradation pathway together with IolG, IolN and IolO. Has no activity on myo-inositol, D-chiro-inositol and 1-keto-D-chiro-inositol. This chain is Scyllo-inosose 3-dehydrogenase, found in Thermotoga maritima (strain ATCC 43589 / DSM 3109 / JCM 10099 / NBRC 100826 / MSB8).